The sequence spans 25 residues: PNPKVFFDMTIGGQSAGRIVMEEYA.

Heterodimer of a 27 kDa subunit and a 17 kDa subunit; disulfide-linked. SBTX is known to be glycosylated but it is not known which one of its two subunits is modified; contains 5% carbohydrates. In terms of tissue distribution, expressed in seeds, leaves, roots and stem (at protein level).

In terms of biological role, involved in plant defense. Inhibits spore germination in C.sojina, A.niger (at concentrations &gt;50 ug/ml) and P.herguei but not in F.oxysporum and F.solani. Does not inhibit vegetative mycelial growth. Inhibits growth of C.albicans and K.marxiannus but not P.membranifaciens or C.parapsilosis. Probably acts by affecting the cell membrane. Does not have urease, chitinase, beta-1,3-glucanase or hemagglutination activities. Does not inhibit trypsin. Injection into mice produces toxic effects such as dyspnea, tonic-clonic convulsion and death. This is Soybean toxin 17 kDa chain from Glycine max (Soybean).